Consider the following 631-residue polypeptide: Extracellular metalloproteinase mep (631 aa).

Positions 1 to 19 (MHGLRLVCSIGTLPLVILA) are cleaved as a signal peptide. A propeptide spanning residues 20 to 241 (YPAASLHTTS…VHGVVDYVAD (222 aa)) is cleaved from the precursor. Asn-282, Asn-332, and Asn-364 each carry an N-linked (GlcNAc...) asparagine glycan. His-425 is a binding site for Zn(2+). Glu-426 is a catalytic residue. His-429 lines the Zn(2+) pocket. Residues Asn-470 and Asn-505 are each glycosylated (N-linked (GlcNAc...) asparagine).

The protein belongs to the peptidase M36 family. Requires Zn(2+) as cofactor.

The protein resides in the secreted. Its function is as follows. Secreted metalloproteinase that allows assimilation of proteinaceous substrates. The chain is Extracellular metalloproteinase mep (mep) from Aspergillus niger (strain ATCC MYA-4892 / CBS 513.88 / FGSC A1513).